Reading from the N-terminus, the 856-residue chain is Leucine--tRNA ligase (856 aa).

The 'HIGH' region signature appears at 42–52 (PYPSGKLHMGH). Positions 615 to 619 (KMSKS) match the 'KMSKS' region motif. Lys618 lines the ATP pocket.

This sequence belongs to the class-I aminoacyl-tRNA synthetase family.

It is found in the cytoplasm. It carries out the reaction tRNA(Leu) + L-leucine + ATP = L-leucyl-tRNA(Leu) + AMP + diphosphate. This Chromohalobacter salexigens (strain ATCC BAA-138 / DSM 3043 / CIP 106854 / NCIMB 13768 / 1H11) protein is Leucine--tRNA ligase.